A 163-amino-acid polypeptide reads, in one-letter code: Nucleotide-binding protein C8J_0350 (163 aa).

It belongs to the YajQ family.

In terms of biological role, nucleotide-binding protein. This Campylobacter jejuni subsp. jejuni serotype O:6 (strain 81116 / NCTC 11828) protein is Nucleotide-binding protein C8J_0350.